We begin with the raw amino-acid sequence, 261 residues long: Thiazole synthase (261 aa).

Lys95 acts as the Schiff-base intermediate with DXP in catalysis. 1-deoxy-D-xylulose 5-phosphate-binding positions include Gly156, 182–183 (AG), and 204–205 (NT).

Belongs to the ThiG family. In terms of assembly, homotetramer. Forms heterodimers with either ThiH or ThiS.

It localises to the cytoplasm. The enzyme catalyses [ThiS sulfur-carrier protein]-C-terminal-Gly-aminoethanethioate + 2-iminoacetate + 1-deoxy-D-xylulose 5-phosphate = [ThiS sulfur-carrier protein]-C-terminal Gly-Gly + 2-[(2R,5Z)-2-carboxy-4-methylthiazol-5(2H)-ylidene]ethyl phosphate + 2 H2O + H(+). Its pathway is cofactor biosynthesis; thiamine diphosphate biosynthesis. Functionally, catalyzes the rearrangement of 1-deoxy-D-xylulose 5-phosphate (DXP) to produce the thiazole phosphate moiety of thiamine. Sulfur is provided by the thiocarboxylate moiety of the carrier protein ThiS. In vitro, sulfur can be provided by H(2)S. This chain is Thiazole synthase, found in Pectobacterium carotovorum subsp. carotovorum (strain PC1).